A 154-amino-acid polypeptide reads, in one-letter code: Heat shock protein beta-3 (154 aa).

The segment at 48-71 is disordered; it reads ARGAGTPQALAEDSASTEKPPGEG. Residues 57–154 form the sHSP domain; sequence LAEDSASTEK…VEVKDSLGTK (98 aa).

The protein belongs to the small heat shock protein (HSP20) family.

It localises to the cytoplasm. Its subcellular location is the nucleus. Functionally, inhibitor of actin polymerization. The polypeptide is Heat shock protein beta-3 (Hspb3) (Mus musculus (Mouse)).